The following is a 488-amino-acid chain: Putative BPI/LBP family protein At1g04970 (488 aa).

The first 24 residues, 1–24, serve as a signal peptide directing secretion; it reads MDVGRCFLFLLLPSFFFLPSQTQS. Residues N79, N109, N231, N242, and N341 are each glycosylated (N-linked (GlcNAc...) asparagine).

The protein belongs to the BPI/LBP/Plunc superfamily. BPI/LBP (TC 1.C.40) family.

The chain is Putative BPI/LBP family protein At1g04970 from Arabidopsis thaliana (Mouse-ear cress).